Here is a 195-residue protein sequence, read N- to C-terminus: Killer cell lectin-like receptor subfamily G member 1 (195 aa).

Over 1 to 38 (MTDSVIYSMLELPTATQAQNDYGPQQKSSSSRPSCSCL) the chain is Cytoplasmic. Positions 5–10 (VIYSML) match the ITIM motif motif. The helical; Signal-anchor for type II membrane protein transmembrane segment at 39–59 (VAIALGLLTAVLLSVLLYQWI) threads the bilayer. The Extracellular segment spans residues 60-195 (LCQGSNYSTC…KCPFADQALF (136 aa)). N65 carries N-linked (GlcNAc...) asparagine glycosylation. A disulfide bond links C75 and C86. A C-type lectin domain is found at 82–185 (YGNHCYYFSV…CEVPLHWVCK (104 aa)). 3 N-linked (GlcNAc...) asparagine glycosylation sites follow: N97, N137, and N150. Cystine bridges form between C103–C184 and C163–C176.

As to quaternary structure, forms a monomer and homodimer; disulfide-linked. Interacts (via ITIM motif) with PTPN11 and INPP5D. In terms of tissue distribution, expressed specifically on natural killer (NK) cells and T-cells, mainly CD8 T-cells.

The protein localises to the cell membrane. Plays an inhibitory role on natural killer (NK) cells and T-cell functions upon binding to their non-MHC ligands. May mediate missing self recognition by binding to a highly conserved site on classical cadherins, enabling it to monitor expression of E-cadherin/CDH1, N-cadherin/CDH2 and R-cadherin/CDH4 on target cells. This is Killer cell lectin-like receptor subfamily G member 1 (KLRG1) from Homo sapiens (Human).